The sequence spans 345 residues: Dihydroorotase (345 aa).

His13 and His15 together coordinate Zn(2+). Substrate is bound by residues His15–Arg17 and Asn41. 3 residues coordinate Zn(2+): Lys100, His137, and His175. An N6-carboxylysine modification is found at Lys100. A substrate-binding site is contributed by His137. Leu220 serves as a coordination point for substrate. Residue Asp248 coordinates Zn(2+). Residue Asp248 is part of the active site. The substrate site is built by His252 and Ala264.

This sequence belongs to the metallo-dependent hydrolases superfamily. DHOase family. Class II DHOase subfamily. Homodimer. Zn(2+) is required as a cofactor.

The catalysed reaction is (S)-dihydroorotate + H2O = N-carbamoyl-L-aspartate + H(+). It participates in pyrimidine metabolism; UMP biosynthesis via de novo pathway; (S)-dihydroorotate from bicarbonate: step 3/3. In terms of biological role, catalyzes the reversible cyclization of carbamoyl aspartate to dihydroorotate. This is Dihydroorotase from Laribacter hongkongensis (strain HLHK9).